Consider the following 353-residue polypeptide: Glutamate 5-kinase (353 aa).

K8 provides a ligand contact to ATP. Substrate contacts are provided by S47, D134, and N146. Residue 198 to 204 coordinates ATP; sequence TGGIRSK. A PUA domain is found at 262 to 339; sequence AGKIYVNKGA…SDLKKILGYE (78 aa).

The protein belongs to the glutamate 5-kinase family.

Its subcellular location is the cytoplasm. The catalysed reaction is L-glutamate + ATP = L-glutamyl 5-phosphate + ADP. Its pathway is amino-acid biosynthesis; L-proline biosynthesis; L-glutamate 5-semialdehyde from L-glutamate: step 1/2. Catalyzes the transfer of a phosphate group to glutamate to form L-glutamate 5-phosphate. The sequence is that of Glutamate 5-kinase from Thermotoga maritima (strain ATCC 43589 / DSM 3109 / JCM 10099 / NBRC 100826 / MSB8).